Reading from the N-terminus, the 254-residue chain is Phosphonates import ATP-binding protein PhnC (254 aa).

Positions 2–246 constitute an ABC transporter domain; the sequence is IQLKNVSKIY…VFDDIYNGGN (245 aa). 35–42 provides a ligand contact to ATP; sequence GLSGAGKS.

It belongs to the ABC transporter superfamily. Phosphonates importer (TC 3.A.1.9.1) family. The complex is composed of two ATP-binding proteins (PhnC), two transmembrane proteins (PhnE) and a solute-binding protein (PhnD).

Its subcellular location is the cell membrane. The catalysed reaction is phosphonate(out) + ATP + H2O = phosphonate(in) + ADP + phosphate + H(+). In terms of biological role, part of the ABC transporter complex PhnCDE involved in phosphonates import. Responsible for energy coupling to the transport system. The polypeptide is Phosphonates import ATP-binding protein PhnC (Lactobacillus johnsonii (strain CNCM I-12250 / La1 / NCC 533)).